An 82-amino-acid chain; its full sequence is ATP synthase subunit c (82 aa).

The next 2 helical transmembrane spans lie at 7 to 27 (AASV…PGIG) and 57 to 77 (FAFM…LLFA).

It belongs to the ATPase C chain family. In terms of assembly, F-type ATPases have 2 components, F(1) - the catalytic core - and F(0) - the membrane proton channel. F(1) has five subunits: alpha(3), beta(3), gamma(1), delta(1), epsilon(1). F(0) has four main subunits: a(1), b(1), b'(1) and c(10-14). The alpha and beta chains form an alternating ring which encloses part of the gamma chain. F(1) is attached to F(0) by a central stalk formed by the gamma and epsilon chains, while a peripheral stalk is formed by the delta, b and b' chains.

It is found in the cellular thylakoid membrane. F(1)F(0) ATP synthase produces ATP from ADP in the presence of a proton or sodium gradient. F-type ATPases consist of two structural domains, F(1) containing the extramembraneous catalytic core and F(0) containing the membrane proton channel, linked together by a central stalk and a peripheral stalk. During catalysis, ATP synthesis in the catalytic domain of F(1) is coupled via a rotary mechanism of the central stalk subunits to proton translocation. Its function is as follows. Key component of the F(0) channel; it plays a direct role in translocation across the membrane. A homomeric c-ring of between 10-14 subunits forms the central stalk rotor element with the F(1) delta and epsilon subunits. The chain is ATP synthase subunit c from Prochlorococcus marinus (strain MIT 9303).